Reading from the N-terminus, the 473-residue chain is Tubulin gamma chain (473 aa).

Residues 33-56 (TDGLSQLPDSSTERDDDTKPFFRE) form a disordered region. Positions 43-56 (STERDDDTKPFFRE) are enriched in basic and acidic residues. GTP is bound at residue 143-149 (AGGTGSG).

This sequence belongs to the tubulin family. As to quaternary structure, interacts with SPC72, SPC97 and SPC98.

Its subcellular location is the cytoplasm. It is found in the cytoskeleton. It localises to the microtubule organizing center. The protein resides in the spindle pole body. Tubulin is the major constituent of microtubules. The gamma chain is found at microtubule organizing centers (MTOC) such as the spindle poles or the centrosome, suggesting that it is involved in the minus-end nucleation of microtubule assembly. TUB4 is an important spindle pole body component that organizes both cytoplasmic and nuclear microtubule arrays. This is Tubulin gamma chain (TUB4) from Saccharomyces cerevisiae (strain ATCC 204508 / S288c) (Baker's yeast).